Here is a 403-residue protein sequence, read N- to C-terminus: MLSVSCPRVYMSRKALDFGQLASCRCRWAGRSGMRVAPRRRMPCVCFVASPSQPGLAAVDVPAEAISSARTTTMIPERISVSSLLEVVSDDLLKLNNNLKSLVGAENPVLVSAAEQIFGAGGKRLRPALVFLVSRATAELAGLLELTTEHQRLAEIIEMIHTASLIHDDVIDDSGMRRGKETIHQLYGTRVAVLAGDFMFAQSSWFLANLENIEVIKLISQVIKDFASGEIKQASTLFDCDVTLDDYLLKSYYKTASLLASSTRSAAIFSGVSTTICEQMYEYGRNLGLSFQVVDDILDFTQSAEQLGKPAGSDLAKGNLTAPVIFALQDEPKLREIIDSEFSESDSLATAIDLVHRSGGIRRAQELAKEKGDLALQNLQCLPKSQFRSTLENVVKYNLQRID.

A chloroplast-targeting transit peptide spans 1 to 62 (MLSVSCPRVY…QPGLAAVDVP (62 aa)). The isopentenyl diphosphate site is built by K123, R126, and H161. 2 residues coordinate Mg(2+): D168 and D172. R177 provides a ligand contact to an all-trans-polyprenyl diphosphate. R178 provides a ligand contact to isopentenyl diphosphate. Positions 254, 255, 292, and 309 each coordinate an all-trans-polyprenyl diphosphate.

Belongs to the FPP/GGPP synthase family. In terms of assembly, homodimer. Interacts with FBN5. It depends on Mg(2+) as a cofactor. Expressed in leaves, stems and roots. Highest expression in leaves and roots.

The protein resides in the plastid. Its subcellular location is the chloroplast. The enzyme catalyses 7 isopentenyl diphosphate + (2E)-geranyl diphosphate = all-trans-nonaprenyl diphosphate + 7 diphosphate. Involved in providing solanesyl diphosphate for plastoquinone-9 (PQ-9) formation. Geranyl diphosphate is the preferred substrate. The polypeptide is Solanesyl-diphosphate synthase 2, chloroplastic (Oryza sativa subsp. japonica (Rice)).